Reading from the N-terminus, the 1112-residue chain is Lysylphosphatidylglycerol biosynthesis bifunctional protein LysX (1112 aa).

A phosphatidylglycerol lysyltransferase region spans residues 1–613; the sequence is MTLTSPPRTR…VLHHDGTAPD (613 aa). A run of 7 helical transmembrane segments spans residues 18–38, 60–80, 84–104, 118–138, 152–172, 209–229, and 308–328; these read VPAA…IASV, FPDT…ALAA, IAWW…VADL, VIGL…RPLF, GVLA…LELF, VNAL…IVLF, and AWLA…ASVG. A lysine--tRNA ligase region spans residues 614–1112; the sequence is MSGLRTDTAD…TLPFPLARPR (499 aa). A DNA-binding region (OB) is located at residues 675–748; sequence VAGRVLRIRD…GTRSLLVRHW (74 aa). Mg(2+) is bound by residues Asp-1024 and Glu-1031.

In the N-terminal section; belongs to the LPG synthetase family. It in the C-terminal section; belongs to the class-II aminoacyl-tRNA synthetase family. Mg(2+) serves as cofactor.

It is found in the cell membrane. The enzyme catalyses tRNA(Lys) + L-lysine + ATP = L-lysyl-tRNA(Lys) + AMP + diphosphate. It catalyses the reaction L-lysyl-tRNA(Lys) + a 1,2-diacyl-sn-glycero-3-phospho-(1'-sn-glycerol) = a 1,2-diacyl-sn-glycero-3-phospho-1'-(3'-O-L-lysyl)-sn-glycerol + tRNA(Lys). Functionally, catalyzes the production of L-lysyl-tRNA(Lys)transfer and the transfer of a lysyl group from L-lysyl-tRNA(Lys) to membrane-bound phosphatidylglycerol (PG), which produces lysylphosphatidylglycerol (LPG), one of the components of the bacterial membrane with a positive net charge. LPG synthesis contributes to the resistance to cationic antimicrobial peptides (CAMPs) and likely protects M.tuberculosis against the CAMPs produced by competiting microorganisms (bacteriocins). In fact, the modification of anionic phosphatidylglycerol with positively charged L-lysine results in repulsion of the peptides. The protein is Lysylphosphatidylglycerol biosynthesis bifunctional protein LysX (lysX) of Mycobacterium sp. (strain KMS).